A 200-amino-acid chain; its full sequence is TATA-box-binding protein 2 (200 aa).

2 tandem repeats follow at residues 25 to 101 and 115 to 192.

The protein belongs to the TBP family. In terms of assembly, belongs to the TFIID complex together with the TBP-associated factors (TAFs). Binds DNA as monomer.

Its subcellular location is the nucleus. In terms of biological role, general transcription factor that functions at the core of the DNA-binding multiprotein factor TFIID. Binding of TFIID to the TATA box is the initial transcriptional step of the pre-initiation complex (PIC), playing a role in the activation of eukaryotic genes transcribed by RNA polymerase II. The polypeptide is TATA-box-binding protein 2 (TBP2) (Zea mays (Maize)).